The sequence spans 459 residues: tRNA modification GTPase MnmE (459 aa).

(6S)-5-formyl-5,6,7,8-tetrahydrofolate-binding residues include arginine 25, glutamate 87, and arginine 126. Positions 221 to 380 (GLKVAIVGRP…LETAILEIVQ (160 aa)) constitute a TrmE-type G domain. Position 231 (asparagine 231) interacts with K(+). GTP contacts are provided by residues 231-236 (NVGKSS), 250-256 (TDLPGTT), and 275-278 (DTAG). Serine 235 is a Mg(2+) binding site. 3 residues coordinate K(+): threonine 250, leucine 252, and threonine 255. Residue threonine 256 coordinates Mg(2+). Lysine 459 is a binding site for (6S)-5-formyl-5,6,7,8-tetrahydrofolate.

It belongs to the TRAFAC class TrmE-Era-EngA-EngB-Septin-like GTPase superfamily. TrmE GTPase family. As to quaternary structure, homodimer. Heterotetramer of two MnmE and two MnmG subunits. K(+) serves as cofactor.

Its subcellular location is the cytoplasm. Its function is as follows. Exhibits a very high intrinsic GTPase hydrolysis rate. Involved in the addition of a carboxymethylaminomethyl (cmnm) group at the wobble position (U34) of certain tRNAs, forming tRNA-cmnm(5)s(2)U34. This is tRNA modification GTPase MnmE from Nostoc sp. (strain PCC 7120 / SAG 25.82 / UTEX 2576).